We begin with the raw amino-acid sequence, 253 residues long: Ubiquinone/menaquinone biosynthesis C-methyltransferase UbiE (253 aa).

S-adenosyl-L-methionine-binding positions include Thr76, Asp97, 125–126 (NA), and Ser142.

Belongs to the class I-like SAM-binding methyltransferase superfamily. MenG/UbiE family.

The catalysed reaction is a 2-demethylmenaquinol + S-adenosyl-L-methionine = a menaquinol + S-adenosyl-L-homocysteine + H(+). It carries out the reaction a 2-methoxy-6-(all-trans-polyprenyl)benzene-1,4-diol + S-adenosyl-L-methionine = a 5-methoxy-2-methyl-3-(all-trans-polyprenyl)benzene-1,4-diol + S-adenosyl-L-homocysteine + H(+). The protein operates within quinol/quinone metabolism; menaquinone biosynthesis; menaquinol from 1,4-dihydroxy-2-naphthoate: step 2/2. It functions in the pathway cofactor biosynthesis; ubiquinone biosynthesis. Methyltransferase required for the conversion of demethylmenaquinol (DMKH2) to menaquinol (MKH2) and the conversion of 2-polyprenyl-6-methoxy-1,4-benzoquinol (DDMQH2) to 2-polyprenyl-3-methyl-6-methoxy-1,4-benzoquinol (DMQH2). The protein is Ubiquinone/menaquinone biosynthesis C-methyltransferase UbiE of Xanthomonas oryzae pv. oryzae (strain MAFF 311018).